We begin with the raw amino-acid sequence, 1311 residues long: Sterol regulatory element-binding protein cleavage-activating protein (1311 aa).

The Cytoplasmic segment spans residues 1–18 (MPLIDKLRERISRAFYSH). A helical transmembrane segment spans residues 19 to 39 (GLLCASYPIPIIILTALCILA). The Lumenal portion of the chain corresponds to 40–277 (SCYPLLKLPL…HIVHVHFKEE (238 aa)). The tract at residues 46–282 (KLPLPGTGPV…HFKEEIGIAE (237 aa)) is loop-1. 2 N-linked (GlcNAc...) asparagine glycosylation sites follow: Asn242 and Asn261. A helical membrane pass occupies residues 278-298 (IGIAELIPLVTTYIILFAYIY). Positions 282 to 440 (ELIPLVTTYI…MFFFTTVLSI (159 aa)) constitute an SSD domain. Residues 299–310 (FSTRKIDLVKSK) are Cytoplasmic-facing. Residues 311-331 (WGLALAAVVTVLSSLLMSVGL) form a helical membrane-spanning segment. The Lumenal portion of the chain corresponds to 332–342 (CTLFGLTPTLN). A helical transmembrane segment spans residues 343–363 (GGEIFPYLVVVIGLENVLVLT). Residues 364-399 (KSVVSTPVDLEVKLRIAQGLRNESWFIMKNMATELG) are Cytoplasmic-facing. Residues 400–420 (IILIGYFTLVPAIQEFCLFAV) form a helical membrane-spanning segment. Val421 is a topological domain (lumenal). A helical membrane pass occupies residues 422–442 (GLVSDFFLQMFFFTTVLSIDI). Residues 443–512 (RRMELADLNK…FFARTRLAQR (70 aa)) are Cytoplasmic-facing. Residues 445 to 450 (MELADL) carry the ER export signal motif. Residues 513–533 (IIMAGTVVWIGILVYTDPAGL) traverse the membrane as a helical segment. The interval 529–726 (DPAGLRNYLT…QTPADVTLYK (198 aa)) is loop-7. Residues 534 to 723 (RNYLTVHVTE…TENQTPADVT (190 aa)) are Lumenal-facing. N-linked (GlcNAc...) asparagine glycosylation is found at Asn583 and Asn651. Residues 724–744 (LYKVAALGLASGIFLVLFFFL) form a helical membrane-spanning segment. The Cytoplasmic segment spans residues 745–1311 (LYRLLCPKNY…YVPSVLEKLD (567 aa)). Residues 747 to 1311 (RLLCPKNYGQ…YVPSVLEKLD (565 aa)) form an interaction with srebf region. 7 WD repeats span residues 790–827 (GHHM…CLTI), 997–1034 (SFES…LRCS), 1037–1076 (DGQS…NQLQ), 1109–1146 (AHRK…CLFT), 1149–1187 (GHSG…RVSH), 1190–1227 (GHRG…KLYS), and 1230–1267 (QDLG…LLQT).

Belongs to the WD repeat SCAP family. In terms of assembly, membrane region forms a homotetramer. Component of the SCAP-SREBP complex (composed of SCAP and srebf1/srebp1 or srebf2/srebp2). Forms a ternary complex with insig1 or insig2 through its transmembrane domains at high sterol concentrations. Interacts with the SEC23-SEC24 complex.

Its subcellular location is the endoplasmic reticulum membrane. It localises to the golgi apparatus membrane. It is found in the cytoplasmic vesicle. The protein resides in the COPII-coated vesicle membrane. Functionally, escort protein required for cholesterol as well as lipid homeostasis. Regulates export of the SCAP-SREBP complex from the endoplasmic reticulum to the Golgi upon low cholesterol, thereby regulating the processing of sterol regulatory element-binding proteins (SREBPs) SREBF1/SREBP1 and SREBF2/SREBP2. At high sterol concentrations, formation of a ternary complex with INSIG (INSIG1 or INSIG2) leads to mask the ER export signal in SCAP, promoting retention of the complex in the endoplasmic reticulum. Low sterol concentrations trigger release of INSIG, a conformational change in the SSD domain of SCAP, unmasking of the ER export signal, promoting recruitment into COPII-coated vesicles and transport of the SCAP-SREBP to the Golgi: in the Golgi, SREBPs are then processed, releasing the transcription factor fragment of SREBPs from the membrane, its import into the nucleus and up-regulation of LDLR, INSIG1 and the mevalonate pathway. Binds cholesterol via its SSD domain. The chain is Sterol regulatory element-binding protein cleavage-activating protein from Xenopus laevis (African clawed frog).